The following is a 248-amino-acid chain: DNA polymerase sliding clamp (248 aa).

The protein belongs to the PCNA family. As to quaternary structure, homotrimer. The subunits circularize to form a toroid; DNA passes through its center. Replication factor C (RFC) is required to load the toroid on the DNA.

Sliding clamp subunit that acts as a moving platform for DNA processing. Responsible for tethering the catalytic subunit of DNA polymerase and other proteins to DNA during high-speed replication. This is DNA polymerase sliding clamp from Cenarchaeum symbiosum (strain A).